A 182-amino-acid chain; its full sequence is ATP synthase subunit delta (182 aa).

It belongs to the ATPase delta chain family. In terms of assembly, F-type ATPases have 2 components, F(1) - the catalytic core - and F(0) - the membrane proton channel. F(1) has five subunits: alpha(3), beta(3), gamma(1), delta(1), epsilon(1). CF(0) has four main subunits: a(1), b(1), b'(1) and c(10-14). The alpha and beta chains form an alternating ring which encloses part of the gamma chain. F(1) is attached to F(0) by a central stalk formed by the gamma and epsilon chains, while a peripheral stalk is formed by the delta, b and b' chains.

Its subcellular location is the cellular thylakoid membrane. Its function is as follows. F(1)F(0) ATP synthase produces ATP from ADP in the presence of a proton or sodium gradient. F-type ATPases consist of two structural domains, F(1) containing the extramembraneous catalytic core and F(0) containing the membrane proton channel, linked together by a central stalk and a peripheral stalk. During catalysis, ATP synthesis in the catalytic domain of F(1) is coupled via a rotary mechanism of the central stalk subunits to proton translocation. Functionally, this protein is part of the stalk that links CF(0) to CF(1). It either transmits conformational changes from CF(0) to CF(1) or is implicated in proton conduction. The chain is ATP synthase subunit delta from Microcystis aeruginosa (strain NIES-843 / IAM M-2473).